The primary structure comprises 37 residues: Large ribosomal subunit protein bL36c (37 aa).

This sequence belongs to the bacterial ribosomal protein bL36 family.

The protein localises to the plastid. This is Large ribosomal subunit protein bL36c from Cuscuta exaltata (Tall dodder).